Reading from the N-terminus, the 421-residue chain is UDP-N-acetylglucosamine 1-carboxyvinyltransferase (421 aa).

22 to 23 (KN) is a phosphoenolpyruvate binding site. Position 93 (Arg-93) interacts with UDP-N-acetyl-alpha-D-glucosamine. Cys-117 functions as the Proton donor in the catalytic mechanism. Cys-117 carries the 2-(S-cysteinyl)pyruvic acid O-phosphothioketal modification. UDP-N-acetyl-alpha-D-glucosamine contacts are provided by residues 122-126 (RPVDL), Asp-308, and Ile-330.

Belongs to the EPSP synthase family. MurA subfamily.

Its subcellular location is the cytoplasm. It catalyses the reaction phosphoenolpyruvate + UDP-N-acetyl-alpha-D-glucosamine = UDP-N-acetyl-3-O-(1-carboxyvinyl)-alpha-D-glucosamine + phosphate. Its pathway is cell wall biogenesis; peptidoglycan biosynthesis. Functionally, cell wall formation. Adds enolpyruvyl to UDP-N-acetylglucosamine. The chain is UDP-N-acetylglucosamine 1-carboxyvinyltransferase from Pseudomonas putida (strain GB-1).